Consider the following 554-residue polypeptide: Acurin A biosynthesis cluster MFS-type transporter (554 aa).

Helical transmembrane passes span 24–44 (WLIFLAIGIATFVAALDTSII), 60–80 (LYIWIINTYLLSSTVSSAIVG), 96–116 (LLIFAVGSAISGAARDTGMLL), 123–143 (GLGGGSITTLSEVLVCDMVSL), and 151–171 (GILGAAWTLAAVVGPIMGGGF). N-linked (GlcNAc...) asparagine glycosylation is present at Asn174. A run of 3 helical transmembrane segments spans residues 179–199 (WIFYINLPIAGSSLFLIVTLL), 219–239 (WGGITLLTLGVTAILLSLTWA), and 251–271 (IVPLILGFLGLLGFIAYEALP). Asn283 carries an N-linked (GlcNAc...) asparagine glycan. 6 helical membrane-spanning segments follow: residues 289–309 (LFVMAFIYSLLLFWVCYFLPI), 324–344 (VMLFPVATTTAPAGIVAGILM), 352–372 (SFQYIGFALMTIACGLFTLLD), 385–405 (ILFGVGTGIVFTTGLPPILAS), 417–437 (TWIFMRNFGAIWGTAIPAAVF), and 496–516 (VWQVSIAFCGVGFLLCFLVKA).

This sequence belongs to the major facilitator superfamily.

Its subcellular location is the membrane. In terms of biological role, MFS-type transporter that may have a role in the biosynthesis of acurin A, a highly reduced polyketide coupled to a serine via a peptide bond; either in extra- or intracellular transport. This chain is Acurin A biosynthesis cluster MFS-type transporter, found in Aspergillus aculeatus (strain ATCC 16872 / CBS 172.66 / WB 5094).